The chain runs to 218 residues: Protein-methionine-sulfoxide reductase heme-binding subunit MsrQ (218 aa).

The next 5 membrane-spanning stretches (helical) occupy residues 12–32 (TLIKSMLFIAALLPFGRLALF), 82–102 (MLGLFAFFYACLHFTTFLWFD), 118–138 (PFITVGFSAFVLLIPLAITST), 150–170 (WQWLHRLVYVIAALGILHYWW), and 180–200 (QPIIFGTIVAVLLLVRVFWAW).

The protein belongs to the MsrQ family. In terms of assembly, heterodimer of a catalytic subunit (MsrP) and a heme-binding subunit (MsrQ). Requires FMN as cofactor. Heme b serves as cofactor.

The protein localises to the cell inner membrane. In terms of biological role, part of the MsrPQ system that repairs oxidized periplasmic proteins containing methionine sulfoxide residues (Met-O), using respiratory chain electrons. Thus protects these proteins from oxidative-stress damage caused by reactive species of oxygen and chlorine generated by the host defense mechanisms. MsrPQ is essential for the maintenance of envelope integrity under bleach stress, rescuing a wide series of structurally unrelated periplasmic proteins from methionine oxidation. MsrQ provides electrons for reduction to the reductase catalytic subunit MsrP, using the quinone pool of the respiratory chain. This chain is Protein-methionine-sulfoxide reductase heme-binding subunit MsrQ, found in Herminiimonas arsenicoxydans.